The chain runs to 442 residues: NAD(P)H sulfur oxidoreductase (CoA-dependent) (442 aa).

An FAD-binding site is contributed by Ala-13–Ala-14. A CoA-binding site is contributed by Arg-24. FAD contacts are provided by residues Glu-35 to Ala-36 and His-42 to Pro-44. CoA is bound by residues Ser-41 to Cys-45, His-62 to Tyr-63, and Arg-72. Cys-45 (redox-active) is an active-site residue. The FAD site is built by Val-82, Asp-280, and Ala-298. Residues Asn-302 and Lys-358 each coordinate CoA. Tyr-422 provides a ligand contact to FAD. Residues Trp-430 and Arg-438 each coordinate CoA.

This sequence belongs to the class-III pyridine nucleotide-disulfide oxidoreductase family. As to quaternary structure, homodimer. Requires FAD as cofactor.

Its subcellular location is the cytoplasm. The enzyme catalyses hydrogen sulfide + NADP(+) = sulfur + NADPH. It carries out the reaction hydrogen sulfide + NAD(+) = sulfur + NADH. It catalyses the reaction NADP(+) + 2 CoA = CoA-disulfide + NADPH + H(+). The catalysed reaction is NAD(+) + 2 CoA = CoA-disulfide + NADH + H(+). In terms of biological role, catalyzes the CoA-dependent reduction of elemental sulfur (S(0)) to produce hydrogen sulfide. Can use both NADPH and NADH, but shows a preference for NADPH. May enable S(0) to be used, via sulfide, for iron-sulfur cluster synthesis by SipA. Also shows coenzyme A disulfide reductase (CoADR) activity with both NADH and NADPH. However, CoADR specific activity is about 20-fold lower than the sulfur reduction assay and CoADR activity appears to be an artifactual side reaction and is not thought to have any physiological relevance. Also shows NAD(P)H oxidase activity with both NADH and NADPH. The chain is NAD(P)H sulfur oxidoreductase (CoA-dependent) from Pyrococcus furiosus (strain ATCC 43587 / DSM 3638 / JCM 8422 / Vc1).